The chain runs to 513 residues: MTNNVITRFAPSPSGFLHIGSARTALFNYLFARHHNGKFLLRIEDTDKERSTKEAVETIFSGLKWLGLDWNGEVIFQSKRNNLYKEAALKLLQNGKAYYCFTSQEEIERQRQQALENKQHFIFNSEWRDKDPSIYPTDIKPVIRLKTPREGSITIHDTLQGEVVIENSHIDDMVLLRADGTATYMLAVVVDDHDMGITHIIRGDDHLTNAARQLAIYQAFGYEVPSMTHIPLIHGADGAKLSKRHGALGVETYKDMGYLPESLCNYLLRLGWSHGDDEIISMTQAIDWFNLDSLGKSPSKLDFAKMNSLNAHYLRMLDNDSLTSKTVEILEQNYNKLLRKLAYRKEFEGNTERSTAAYIDIREDASTGLTYKLPLTVELPKKFKVSEQEIGYIKQAMPSLLVRSATLLELTRLAQIYLVDSPIIYNQDAKKIIENCDKNLIKQVIENLSELEQFDKESVQNKFKEIAAANDLKLNDIMPPVRALITGMTASPSVFEIAEILGKENILKRLKII.

Residues Pro11–Ser21 carry the 'HIGH' region motif. The short motif at Lys240 to Arg244 is the 'KMSKS' region element. Lys243 provides a ligand contact to ATP.

The protein belongs to the class-I aminoacyl-tRNA synthetase family. Glutamate--tRNA ligase type 1 subfamily. Monomer.

It localises to the cytoplasm. The catalysed reaction is tRNA(Glu) + L-glutamate + ATP = L-glutamyl-tRNA(Glu) + AMP + diphosphate. Functionally, catalyzes the attachment of glutamate to tRNA(Glu) in a two-step reaction: glutamate is first activated by ATP to form Glu-AMP and then transferred to the acceptor end of tRNA(Glu). In Rickettsia massiliae (strain Mtu5), this protein is Glutamate--tRNA ligase 2.